The sequence spans 470 residues: Cannabinoid receptor type 1B (470 aa).

Residues 1–113 lie on the Extracellular side of the membrane; sequence MKLALHRIAG…CFMILTPAQQ (113 aa). 2 N-linked (GlcNAc...) asparagine glycosylation sites follow: Asn78 and Asn86. A helical membrane pass occupies residues 114-139; it reads LVIVILAITLGTFTVLENFVVLCVIL. The Cytoplasmic segment spans residues 140–151; sequence HSHTLRSRPSYH. Residues 152–172 form a helical membrane-spanning segment; that stretch reads FIGSLAVADLIGSIIFVYSFL. Over 173–184 the chain is Extracellular; the sequence is DFHVLHRKDSPS. Residues 185-209 traverse the membrane as a helical segment; the sequence is IFLFKLAGVIASFTASVGSLFLTAI. At 210–229 the chain is on the cytoplasmic side; sequence DRYVSIHRPMAYKRIITKTK. A helical membrane pass occupies residues 230–252; the sequence is AVIAFSVMWAISIEFSLLPLLGW. Residues 253-270 lie on the Extracellular side of the membrane; that stretch reads NCKRLHSVCSDIFPLIDE. Residues 271–296 form a helical membrane-spanning segment; that stretch reads KYLMFWIGMTTVLLLFIIYAYMFILW. The Cytoplasmic portion of the chain corresponds to 297-341; that stretch reads KSHHHAVRMLSRSSQRSIIVYTSEGTKVQTVRPEQARMDLRLAKT. Residues 342–362 form a helical membrane-spanning segment; that stretch reads LVLILVALIICWGPLLAIMVY. At 363 to 374 the chain is on the extracellular side; that stretch reads DLFGRVNDFIKT. The helical transmembrane segment at 375 to 396 threads the bilayer; that stretch reads VFAFCSMLCLLNSTINPVIYAM. Topologically, residues 397–470 are cytoplasmic; it reads RSKDLRRAFV…VTASSPAEAV (74 aa). Residue Cys412 is the site of S-palmitoyl cysteine attachment. Positions 418–434 are enriched in polar residues; that stretch reads SLDSSAESDWNSRSVRS. Positions 418–450 are disordered; sequence SLDSSAESDWNSRSVRSTGGRAGKDRSVGGKPQ.

It belongs to the G-protein coupled receptor 1 family. Palmitoylation at Cys-412 is important for recruitment at both plasma membrane and lipid rafts and association with G protein alpha subunits.

It localises to the cell membrane. The protein localises to the mitochondrion outer membrane. Its subcellular location is the cell projection. The protein resides in the axon. It is found in the presynapse. G-protein coupled receptor for cannabinoids. Mediates many cannabinoid-induced effects in the central nervous system (CNS), as well as in peripheral tissues. Regulates cellular respiration and energy production in response to cannabinoids. Signaling typically involves reduction in cyclic AMP. In Takifugu rubripes (Japanese pufferfish), this protein is Cannabinoid receptor type 1B (cnr1b).